The primary structure comprises 494 residues: 4-hydroxyphenylacetate 3-monooxygenase oxygenase component (494 aa).

Residues 103-107 (RSPDY) and His149 each bind substrate. FAD is bound by residues 149–151 (HTL), 155–158 (QMNR), and Thr192. 205-206 (ST) contacts substrate. 455-458 (DPVR) contacts FAD.

The protein belongs to the FADH(2)-utilizing monooxygenase family. 4-HPA 3-monooxygenase consists of a reductase component HpaI and an oxygenase component HpaH.

It catalyses the reaction 4-hydroxyphenylacetate + FADH2 + O2 = 3,4-dihydroxyphenylacetate + FAD + H2O + H(+). The protein operates within aromatic compound metabolism; 4-hydroxyphenylacetate degradation; pyruvate and succinate semialdehyde from 4-hydroxyphenylacetate: step 1/7. Functionally, utilizes FADH(2) supplied by HpaI, to catalyze the hydroxylation of 4-hydroxyphenylacetic acid, leading to the production of 3,4-dihydroxyphenylacetic acid (DHPA). This chain is 4-hydroxyphenylacetate 3-monooxygenase oxygenase component (hpaH), found in Geobacillus sp. (strain PA-9).